The sequence spans 348 residues: Transmembrane protease serine 12 (348 aa).

Positions Met1–Ser20 are cleaved as a signal peptide. The Extracellular portion of the chain corresponds to Asp21 to Gly324. Residues Ser24 to Ala46 form a disordered region. In terms of domain architecture, Peptidase S1 spans Ile78–Phe318. Cysteines 107 and 123 form a disulfide. Residues His122 and Asp171 each act as charge relay system in the active site. 3 disulfides stabilise this stretch: Cys206/Cys274, Cys237/Cys253, and Cys264/Cys294. N-linked (GlcNAc...) asparagine glycans are attached at residues Asn219 and Asn249. Ser268 (charge relay system) is an active-site residue. The helical transmembrane segment at Ile325–Leu345 threads the bilayer. Residues Ala346 to Thr348 are Cytoplasmic-facing.

The protein belongs to the peptidase S1 family. As to expression, in testis, expressed in spermatocytes and spermatids (at protein level).

The protein localises to the cell membrane. The protein resides in the cytoplasmic vesicle. Its subcellular location is the secretory vesicle. It is found in the acrosome. In terms of biological role, required for male fertility. Plays a critical role in sperm capacitation and acrosome reactions during fertilization, and also plays a role in the regulation of proteins involved in spermatogenesis. Regulates protein pathways that promote chromosomal synapsis formation, double-strand break repair, formation of the inner mitochondrial membrane cristae and apoptosis in developing sperm. Required for normal sperm motility and binding to the zona pellucida, potentially via a role in ADAM3 protein maturation. The sequence is that of Transmembrane protease serine 12 from Homo sapiens (Human).